The chain runs to 378 residues: 3-ketosteroid-9-alpha-monooxygenase, oxygenase component (378 aa).

The region spanning 26-128 (WHCIGLAKDF…TMERNGVLFV (103 aa)) is the Rieske domain. Residues Cys67, His69, Cys86, and His89 each contribute to the [2Fe-2S] cluster site. 4 residues coordinate Fe cation: Asn175, His181, His186, and Asp305.

Homotrimer. The two-component system 3-ketosteroid-9-alpha-monooxygenase is composed of an oxygenase component KshA and a reductase component KshB. Requires [2Fe-2S] cluster as cofactor. Fe cation is required as a cofactor.

It carries out the reaction androsta-1,4-diene-3,17-dione + 2 reduced [2Fe-2S]-[ferredoxin] + O2 + 2 H(+) = 9alpha-hydroxyandrosta-1,4-diene-3,17-dione + 2 oxidized [2Fe-2S]-[ferredoxin] + H2O. Its activity is regulated as follows. KSH activity is completely inhibited by zinc ions. KshA is specifically inhibited by Fe(3+), Co(2+), Zn(2+) and Ni(2+) ions. In terms of biological role, in vitro, catalyzes the introduction of a 9alpha-hydroxyl moiety into the ring B of 3-ketosteroid substrates such as 1,4-androstadiene-3,17-dione (ADD), 4-androstene-3,17-dione (AD), 4-androstene-17beta-ol-3-one (testosterone), 4-pregnene-3,20-dione (progesterone), 19-nor-4-androstene-3,17-dione (nordion), 1-(5alpha)-androstene-3,17-dione, 5alpha-androstane-3,17-dione and 5beta-androstane-3,17-dione. KSH has the highest activity with 3-keto-delta4 steroid substrates. The polypeptide is 3-ketosteroid-9-alpha-monooxygenase, oxygenase component (Rhodococcus rhodochrous).